We begin with the raw amino-acid sequence, 50 residues long: Phospholipase A2 trimorphin (50 aa).

Residues tyrosine 28, glycine 30, and glycine 32 each coordinate Ca(2+). Residues cysteine 29 and cysteine 45 are joined by a disulfide bond. Histidine 48 is a catalytic residue. Residue aspartate 49 participates in Ca(2+) binding.

Ca(2+) is required as a cofactor. Expressed by the venom gland.

It localises to the secreted. The catalysed reaction is a 1,2-diacyl-sn-glycero-3-phosphocholine + H2O = a 1-acyl-sn-glycero-3-phosphocholine + a fatty acid + H(+). Inhibited by EDTA. Its function is as follows. PLA2 catalyzes the calcium-dependent hydrolysis of the 2-acyl groups in 3-sn-phosphoglycerides. In Trimorphodon lambda (Sonoran lyre snake), this protein is Phospholipase A2 trimorphin.